We begin with the raw amino-acid sequence, 294 residues long: Formate dehydrogenase, nitrate-inducible, iron-sulfur subunit (294 aa).

At 1–256 (MAMETQDIIK…DTSVSLWKGA (256 aa)) the chain is on the periplasmic side. 4Fe-4S ferredoxin-type domains are found at residues 30–58 (VAKL…IRDE), 91–123 (LEWL…QYAN), 124–153 (GIVD…LNKE), and 158–189 (YKCT…FGTK). [4Fe-4S] cluster-binding residues include Cys-39, Cys-42, Cys-45, Cys-49, Cys-100, Cys-103, Cys-108, Cys-112, Cys-133, Cys-136, Cys-139, Cys-143, Cys-160, Cys-163, Cys-175, and Cys-179. The helical transmembrane segment at 257–279 (LKPLAAAGFIATFAGLIFHYIGI) threads the bilayer. Residues 280–294 (GPNKEVDDDEEDHHE) are Cytoplasmic-facing.

As to quaternary structure, trimer of heterotrimers, consisting of subunits alpha, beta and gamma. It depends on [4Fe-4S] cluster as a cofactor.

It localises to the cell inner membrane. In terms of biological role, formate dehydrogenase allows E.coli to use formate as major electron donor during anaerobic respiration, when nitrate is used as electron acceptor. The beta subunit FdnH is an electron transfer unit containing 4 iron-sulfur clusters; it serves as a conduit for electrons that are transferred from the formate oxidation site in the alpha subunit (FdnG) to the menaquinone associated with the gamma subunit (FdnI) of formate dehydrogenase-N. Formate dehydrogenase-N is part of a system that generates proton motive force, together with the dissimilatory nitrate reductase (Nar). The chain is Formate dehydrogenase, nitrate-inducible, iron-sulfur subunit (fdnH) from Escherichia coli (strain K12).